The following is a 269-amino-acid chain: Regulatory protein RecX (269 aa).

Belongs to the RecX family.

The protein resides in the cytoplasm. Its function is as follows. Modulates RecA activity. The protein is Regulatory protein RecX of Listeria monocytogenes serotype 4a (strain HCC23).